Reading from the N-terminus, the 28-residue chain is Mu-theraphotoxin-Hsp1a (28 aa).

3 disulfide bridges follow: cysteine 2/cysteine 16, cysteine 9/cysteine 21, and cysteine 15/cysteine 25. At asparagine 28 the chain carries Asparagine amide.

The protein belongs to the neurotoxin 30 (phrixotoxin) family. Expressed by the venom gland.

The protein resides in the secreted. Functionally, potent and selective inhibitor of Nav1.7/SCN9A sodium channels. Inhibits Nav1.7/SCN9A peak current (IC(50)=13 nM). In vivo, does not induce visible signs of toxicity when intravenously injected into mice. In Homoeomma sp. (Peruvian tarantula), this protein is Mu-theraphotoxin-Hsp1a.